Reading from the N-terminus, the 443-residue chain is MSSTDSVVAGQAKVTTWRKTDTRWVLGLFGTAIGAGVLFFPISAGIGGLLPIIFMLILAFPIAFFCHRALARLCLSGRSISDNITDTVDQHFGHVGGVVITFLYFFAICPLLWIYGVTITNTFIAFWQHQLLLPAINRGVVALAILLVMAFFIYFGKDLMVKVMGYLVFPFITCLVLISLSLIPYWTGDIFTSFDMHSLSLFGSHGILVTVWLGIAIMVFSFNFSPIVSSFVVSKREEYEADFGREYTEQKCAKIISRASVLMVVVVMFFAFSCLFTLSPQDMAQAKQQNIPILSYLANHFSSLGSGKSTYATVLEYGASIIALVAIFKSFFGHYLGTLEGLNGLIIKFGYHGEKSQAPMKKLNMISMVIIMGSTWVIAYINPNILDLIGAMGAPIIAALLCLLPMYAVWRVPALAKYKGKASNYFVTIIGLLTILNIVYQLM.

11 consecutive transmembrane segments (helical) span residues 24–44 (WVLG…PISA), 45–65 (GIGG…IAFF), 95–115 (VGGV…LWIY), 140–160 (VVAL…KDLM), 163–183 (VMGY…LSLI), 207–227 (ILVT…FSPI), 259–279 (ASVL…FTLS), 319–339 (ASII…LGTL), 363–383 (LNMI…YINP), 385–405 (ILDL…CLLP), and 423–443 (SNYF…YQLM).

The protein belongs to the amino acid/polyamine transporter 2 family. SdaC/TdcC subfamily.

It localises to the cell inner membrane. The catalysed reaction is L-threonine(in) + H(+)(in) = L-threonine(out) + H(+)(out). It catalyses the reaction L-serine(in) + H(+)(in) = L-serine(out) + H(+)(out). Its function is as follows. Involved in the import of threonine and serine into the cell, with the concomitant import of a proton (symport system). The chain is Threonine/serine transporter TdcC from Edwardsiella piscicida.